Here is a 293-residue protein sequence, read N- to C-terminus: MPWIQLKLNTTGANAEDLSDALMEAGSVSITFQDTHDTPVFEPLPGETRLWGDTDVIGLFDAETDMKAVVAQLEQHPLLGAGFAHKIEQLEDKDWEREWMDNFHPMRFGERLWICPSWRDVPDENAVNVMLDPGLAFGTGTHPTTAMCLQWLDGLDLQGKTVIDFGCGSGILAIAALKLGAAKAIGIDIDPQAIQASRDNAQRNGVSERLELYLPQDQPEAMKADVVVANILAGPLRELAPLISVLPVTGGLLGLSGILASQAESVCEAYAPLFTLDPVVEKEEWCRITGRKN.

Positions 145, 166, 188, and 230 each coordinate S-adenosyl-L-methionine.

Belongs to the methyltransferase superfamily. PrmA family.

The protein resides in the cytoplasm. The catalysed reaction is L-lysyl-[protein] + 3 S-adenosyl-L-methionine = N(6),N(6),N(6)-trimethyl-L-lysyl-[protein] + 3 S-adenosyl-L-homocysteine + 3 H(+). Its function is as follows. Methylates ribosomal protein L11. The chain is Ribosomal protein L11 methyltransferase from Klebsiella pneumoniae (strain 342).